The chain runs to 535 residues: Peroxisomal membrane protein PEX29 (535 aa).

The next 2 membrane-spanning stretches (helical) occupy residues 139 to 159 (LSVPFVLIDQVIIIFSWSKPL) and 176 to 196 (ILLLSLPFFYTCFEIIVPAYM). N239 is a glycosylation site (N-linked (GlcNAc...) asparagine). Residues 247–267 (MLLYVMSYDFVTSLIVKYLYF) form a helical membrane-spanning segment. An N-linked (GlcNAc...) asparagine glycan is attached at N271. The next 2 membrane-spanning stretches (helical) occupy residues 272–292 (ITIFIFVALLTSGTLLTLFGA) and 297–317 (AMLPFIKVTLSVGLWAATIAM). N450 and N515 each carry an N-linked (GlcNAc...) asparagine glycan. Residues 511 to 535 (AHRRNKSMESSNSLHPVKSIDSVDG) are disordered.

The protein belongs to the PEX28-32 family. PEX29 subfamily.

It is found in the endoplasmic reticulum membrane. In terms of biological role, with PEX23, contributes to the formation of endoplasmic reticulum-mitochondria junctions which are important for mitochondrial function. Involved in lipid dropplets formation. In Ogataea parapolymorpha (strain ATCC 26012 / BCRC 20466 / JCM 22074 / NRRL Y-7560 / DL-1) (Yeast), this protein is Peroxisomal membrane protein PEX29.